Reading from the N-terminus, the 116-residue chain is Large ribosomal subunit protein bL19 (116 aa).

It belongs to the bacterial ribosomal protein bL19 family.

In terms of biological role, this protein is located at the 30S-50S ribosomal subunit interface and may play a role in the structure and function of the aminoacyl-tRNA binding site. The sequence is that of Large ribosomal subunit protein bL19 from Geobacillus sp. (strain WCH70).